A 502-amino-acid polypeptide reads, in one-letter code: Packaging protein 1 (502 aa).

Positions 99-122 are disordered; sequence EAMEGQNPTCSRHESAYPIQSQVS. 226-233 serves as a coordination point for ATP; that stretch reads GPTGCGKS. A DNA-binding region spans residues 495–502; that stretch reads RYYHSKKK.

It belongs to the adenoviridae packaging protein 1 family. As to quaternary structure, homodimer. Part of a genome packaging complex composed of packaging proteins 1, 2 and 3; this complex specifically binds to the packaging sequence on the left end of viral genomic DNA and performs packaging of the viral genome. Interacts with protein 33K.

It localises to the virion. Its subcellular location is the host nucleus. It is found in the host nucleoplasm. The protein localises to the host nucleolus. In terms of biological role, component of the packaging machinery which encapsidates the viral DNA into preformed capsids and transcriptional activator of the viral major late promoter (MLP). Binds, along with packaging proteins 2 and 3, to the specific packaging sequence on the left end of viral genomic DNA and displays ATPase activity thereby providing the power stroke of the packaging machinery. The activity of packaging protein IVa2 is stimulated by protein 33K which acts as a terminase. May be the protein that pumps DNA into the capsid powered by ATP hydrolysis. Specifically binds to the 5'-CG-3' nucleotides of the repeats making up the packaging sequence. Component of the DEF-A and DEF-B transcription factors that bind downstream elements of the major late promoter (MLP), and stimulate transcription from the MLP after initiation of viral DNA replication. DEF-A is a heterodimer packaging proteins 1 and 2 and DEF-B is a homodimer of packaging protein 1. This is Packaging protein 1 from Canis lupus familiaris (Dog).